The sequence spans 190 residues: Xanthine phosphoribosyltransferase (190 aa).

The xanthine site is built by leucine 20 and asparagine 27. 128 to 132 contacts 5-phospho-alpha-D-ribose 1-diphosphate; that stretch reads ANGKA. A xanthine-binding site is contributed by lysine 156.

Belongs to the purine/pyrimidine phosphoribosyltransferase family. Xpt subfamily. As to quaternary structure, homodimer.

It is found in the cytoplasm. It carries out the reaction XMP + diphosphate = xanthine + 5-phospho-alpha-D-ribose 1-diphosphate. Its pathway is purine metabolism; XMP biosynthesis via salvage pathway; XMP from xanthine: step 1/1. Converts the preformed base xanthine, a product of nucleic acid breakdown, to xanthosine 5'-monophosphate (XMP), so it can be reused for RNA or DNA synthesis. In Stutzerimonas stutzeri (strain A1501) (Pseudomonas stutzeri), this protein is Xanthine phosphoribosyltransferase.